Consider the following 683-residue polypeptide: Long-chain-fatty-acid--CoA ligase 5 (683 aa).

The chain crosses the membrane as a helical; Signal-anchor for type III membrane protein span at residues 12–32; the sequence is LPTPALICILTFGAAIFLWLI. I32 bears the Phosphoserine mark. Over 33–683 the chain is Cytoplasmic; it reads TRPQPVLPLL…IDSLYEHIQD (651 aa). Residue K361 is modified to N6-acetyllysine.

The protein belongs to the ATP-dependent AMP-binding enzyme family. It depends on Mg(2+) as a cofactor.

The protein resides in the mitochondrion. It localises to the endoplasmic reticulum. The protein localises to the mitochondrion outer membrane. It is found in the endoplasmic reticulum membrane. Its subcellular location is the cell membrane. The catalysed reaction is a long-chain fatty acid + ATP + CoA = a long-chain fatty acyl-CoA + AMP + diphosphate. It carries out the reaction (5Z,8Z,11Z,14Z)-eicosatetraenoate + ATP + CoA = (5Z,8Z,11Z,14Z)-eicosatetraenoyl-CoA + AMP + diphosphate. The enzyme catalyses hexadecanoate + ATP + CoA = hexadecanoyl-CoA + AMP + diphosphate. It catalyses the reaction (E)-hexadec-2-enoate + ATP + CoA = (2E)-hexadecenoyl-CoA + AMP + diphosphate. The catalysed reaction is 15-hydroxy-(5Z,8Z,11Z,13E)-eicosatetraenoate + ATP + CoA = 15-hydroxy-(5Z,8Z,11Z,13E)-eicosatetraenoyl-CoA + AMP + diphosphate. It carries out the reaction 12-hydroxy-(5Z,8Z,10E,14Z)-eicosatetraenoate + ATP + CoA = 12-hydroxy-(5Z,8Z,10E,14Z)-eicosatetraenoyl-CoA + AMP + diphosphate. The enzyme catalyses 5-hydroxy-(6E,8Z,11Z,14Z)-eicosatetraenoate + ATP + CoA = 5-hydroxy-(6E,8Z,11Z,14Z)-eicosatetraenoyl-CoA + AMP + diphosphate. It catalyses the reaction 14,15-epoxy-(5Z,8Z,11Z)-eicosatrienoate + ATP + CoA = 14,15-epoxy-(5Z,8Z,11Z)-eicosatrienoyl-CoA + AMP + diphosphate. The catalysed reaction is 11,12-epoxy-(5Z,8Z,14Z)-eicosatrienoate + ATP + CoA = 11,12-epoxy-(5Z,8Z,14Z)-eicosatrienoyl-CoA + AMP + diphosphate. It carries out the reaction (9Z)-octadecenoate + ATP + CoA = (9Z)-octadecenoyl-CoA + AMP + diphosphate. Its function is as follows. Catalyzes the conversion of long-chain fatty acids to their active form acyl-CoAs for both synthesis of cellular lipids, and degradation via beta-oxidation. ACSL5 may activate fatty acids from exogenous sources for the synthesis of triacylglycerol destined for intracellular storage. Utilizes a wide range of saturated fatty acids with a preference for C16-C18 unsaturated fatty acids. It was suggested that it may also stimulate fatty acid oxidation. At the villus tip of the crypt-villus axis of the small intestine may sensitize epithelial cells to apoptosis specifically triggered by the death ligand TRAIL. May have a role in the survival of glioma cells. The polypeptide is Long-chain-fatty-acid--CoA ligase 5 (Homo sapiens (Human)).